The following is a 300-amino-acid chain: NAD kinase (300 aa).

Catalysis depends on Asp75, which acts as the Proton acceptor. Residues 75 to 76 (DG), 149 to 150 (ND), Arg177, Asp179, 190 to 195 (TAYALS), Ala214, and Gln248 contribute to the NAD(+) site.

Belongs to the NAD kinase family. The cofactor is a divalent metal cation.

The protein localises to the cytoplasm. It carries out the reaction NAD(+) + ATP = ADP + NADP(+) + H(+). In terms of biological role, involved in the regulation of the intracellular balance of NAD and NADP, and is a key enzyme in the biosynthesis of NADP. Catalyzes specifically the phosphorylation on 2'-hydroxyl of the adenosine moiety of NAD to yield NADP. The sequence is that of NAD kinase from Burkholderia multivorans (strain ATCC 17616 / 249).